We begin with the raw amino-acid sequence, 122 residues long: Small ribosomal subunit protein uS13 (122 aa).

Residues 91 to 122 (RHRRGLPVHGQRTKTNARTRKGPKRTVAGKKK) are disordered.

It belongs to the universal ribosomal protein uS13 family. Part of the 30S ribosomal subunit. Forms a loose heterodimer with protein S19. Forms two bridges to the 50S subunit in the 70S ribosome.

Functionally, located at the top of the head of the 30S subunit, it contacts several helices of the 16S rRNA. In the 70S ribosome it contacts the 23S rRNA (bridge B1a) and protein L5 of the 50S subunit (bridge B1b), connecting the 2 subunits; these bridges are implicated in subunit movement. Contacts the tRNAs in the A and P-sites. This is Small ribosomal subunit protein uS13 from Kocuria rhizophila (strain ATCC 9341 / DSM 348 / NBRC 103217 / DC2201).